Reading from the N-terminus, the 681-residue chain is DNA-directed RNA polymerase subunit beta' (681 aa).

4 residues coordinate Zn(2+): Cys69, Cys71, Cys87, and Cys90. Mg(2+) is bound by residues Asp489, Asp491, and Asp493.

This sequence belongs to the RNA polymerase beta' chain family. RpoC1 subfamily. In terms of assembly, in plastids the minimal PEP RNA polymerase catalytic core is composed of four subunits: alpha, beta, beta', and beta''. When a (nuclear-encoded) sigma factor is associated with the core the holoenzyme is formed, which can initiate transcription. It depends on Mg(2+) as a cofactor. Requires Zn(2+) as cofactor.

It localises to the plastid. The protein localises to the chloroplast. It catalyses the reaction RNA(n) + a ribonucleoside 5'-triphosphate = RNA(n+1) + diphosphate. Its function is as follows. DNA-dependent RNA polymerase catalyzes the transcription of DNA into RNA using the four ribonucleoside triphosphates as substrates. The sequence is that of DNA-directed RNA polymerase subunit beta' from Nicotiana tomentosiformis (Tobacco).